Reading from the N-terminus, the 86-residue chain is Pyruvate synthase subunit PorD (86 aa).

4Fe-4S ferredoxin-type domains are found at residues 25–54 (FRPILDNEKCVKCENCYIFCPEGAIQEDEN) and 55–84 (GNFKIDYDYCKGCLICMNECPVNAITKVRE). Residues C34, C37, C40, C44, C64, C67, C70, and C74 each coordinate [4Fe-4S] cluster.

As to quaternary structure, heterotetramer of one alpha, one beta, one delta and one gamma chain. Requires [4Fe-4S] cluster as cofactor.

This is Pyruvate synthase subunit PorD (porD) from Methanocaldococcus jannaschii (strain ATCC 43067 / DSM 2661 / JAL-1 / JCM 10045 / NBRC 100440) (Methanococcus jannaschii).